We begin with the raw amino-acid sequence, 380 residues long: 1-deoxy-D-xylulose 5-phosphate reductoisomerase (380 aa).

NADPH-binding residues include T10, G11, S12, I13, G36, R37, N38, and N120. K121 lines the 1-deoxy-D-xylulose 5-phosphate pocket. E122 lines the NADPH pocket. D146 contacts Mn(2+). The 1-deoxy-D-xylulose 5-phosphate site is built by S147, E148, S172, and H195. E148 contacts Mn(2+). NADPH is bound at residue G201. 4 residues coordinate 1-deoxy-D-xylulose 5-phosphate: S208, N213, K214, and E217. E217 serves as a coordination point for Mn(2+).

It belongs to the DXR family. Mg(2+) serves as cofactor. It depends on Mn(2+) as a cofactor.

The catalysed reaction is 2-C-methyl-D-erythritol 4-phosphate + NADP(+) = 1-deoxy-D-xylulose 5-phosphate + NADPH + H(+). It functions in the pathway isoprenoid biosynthesis; isopentenyl diphosphate biosynthesis via DXP pathway; isopentenyl diphosphate from 1-deoxy-D-xylulose 5-phosphate: step 1/6. Functionally, catalyzes the NADPH-dependent rearrangement and reduction of 1-deoxy-D-xylulose-5-phosphate (DXP) to 2-C-methyl-D-erythritol 4-phosphate (MEP). The polypeptide is 1-deoxy-D-xylulose 5-phosphate reductoisomerase (Listeria welshimeri serovar 6b (strain ATCC 35897 / DSM 20650 / CCUG 15529 / CIP 8149 / NCTC 11857 / SLCC 5334 / V8)).